The chain runs to 358 residues: UDP-N-acetylglucosamine--N-acetylmuramyl-(pentapeptide) pyrophosphoryl-undecaprenol N-acetylglucosamine transferase (358 aa).

Residues 11–13, N124, R164, S195, and Q291 contribute to the UDP-N-acetyl-alpha-D-glucosamine site; that span reads TGG.

Belongs to the glycosyltransferase 28 family. MurG subfamily.

The protein resides in the cell inner membrane. The catalysed reaction is di-trans,octa-cis-undecaprenyl diphospho-N-acetyl-alpha-D-muramoyl-L-alanyl-D-glutamyl-meso-2,6-diaminopimeloyl-D-alanyl-D-alanine + UDP-N-acetyl-alpha-D-glucosamine = di-trans,octa-cis-undecaprenyl diphospho-[N-acetyl-alpha-D-glucosaminyl-(1-&gt;4)]-N-acetyl-alpha-D-muramoyl-L-alanyl-D-glutamyl-meso-2,6-diaminopimeloyl-D-alanyl-D-alanine + UDP + H(+). It participates in cell wall biogenesis; peptidoglycan biosynthesis. Its function is as follows. Cell wall formation. Catalyzes the transfer of a GlcNAc subunit on undecaprenyl-pyrophosphoryl-MurNAc-pentapeptide (lipid intermediate I) to form undecaprenyl-pyrophosphoryl-MurNAc-(pentapeptide)GlcNAc (lipid intermediate II). This Leptospira borgpetersenii serovar Hardjo-bovis (strain JB197) protein is UDP-N-acetylglucosamine--N-acetylmuramyl-(pentapeptide) pyrophosphoryl-undecaprenol N-acetylglucosamine transferase.